The chain runs to 481 residues: Arginine biosynthesis bifunctional protein ArgJ, chloroplastic (481 aa).

Positions 225, 251, 262, 349, 476, and 481 each coordinate substrate. T262 functions as the Nucleophile in the catalytic mechanism.

This sequence belongs to the ArgJ family. In terms of assembly, heterodimer of an alpha and a beta chain.

It is found in the plastid. Its subcellular location is the chloroplast. It catalyses the reaction N(2)-acetyl-L-ornithine + L-glutamate = N-acetyl-L-glutamate + L-ornithine. The enzyme catalyses L-glutamate + acetyl-CoA = N-acetyl-L-glutamate + CoA + H(+). Its pathway is amino-acid biosynthesis; L-arginine biosynthesis; L-ornithine and N-acetyl-L-glutamate from L-glutamate and N(2)-acetyl-L-ornithine (cyclic): step 1/1. It participates in amino-acid biosynthesis; L-arginine biosynthesis; N(2)-acetyl-L-ornithine from L-glutamate: step 1/4. Functionally, catalyzes two activities which are involved in the cyclic version of arginine biosynthesis: the synthesis of acetylglutamate from glutamate and acetyl-CoA, and of ornithine by transacetylation between acetylornithine and glutamate. The sequence is that of Arginine biosynthesis bifunctional protein ArgJ, chloroplastic from Populus trichocarpa (Western balsam poplar).